Consider the following 461-residue polypeptide: F-box protein At3g62230 (461 aa).

Positions 7–55 (VDIISTLSDFLLVLIISNLSFKEALSTSRLSTRWRHICRETRNISFRED) constitute an F-box domain.

In terms of assembly, part of a SCF (ASK-cullin-F-box) protein ligase complex. Interacts with ASK4.

The protein localises to the nucleus. It functions in the pathway protein modification; protein ubiquitination. Its function is as follows. Component of SCF(ASK-cullin-F-box) E3 ubiquitin ligase complexes, which may mediate the ubiquitination and subsequent proteasomal degradation of target proteins. The protein is F-box protein At3g62230 of Arabidopsis thaliana (Mouse-ear cress).